A 213-amino-acid chain; its full sequence is BREX protein BrxA (213 aa).

The protein belongs to the BrxA family.

Its function is as follows. BREX systems (bacteriophage exclusion) provide immunity against bacteriophage. A probably non-essential part of a type 1 BREX system which protects against dsDNA phage. This system allows phage adsorption but prevents phage DNA replication, without degradation of the phage DNA. Methylation of bacterial DNA by PglX guides self/non-self discrimination. When the brxA-brxB-brxC-pglX-pglZ-brxL genes are transformed into a susceptible E.coli strain (BW25113) they confer very high resistance to infection by bacteriophage VR7 and VpaE1, about 100-fold protection against lambda, T5 and T7 and no protection against RNA phage Qbeta, ssDNA phage M13 or dSDNA phage T4 and VR5. Glycosylated phage DNA is not susceptible to BREX. The BREX system does not confer resistance to lysogenic lambda phage, i.e. prophage that are integrated into the chromosomal DNA and then induced to form phage. This Escherichia coli O9:H4 (strain HS) protein is BREX protein BrxA.